The following is a 267-amino-acid chain: Diphthine--ammonia ligase (267 aa).

At Tyr-97 the chain carries Phosphotyrosine.

This sequence belongs to the Diphthine--ammonia ligase family.

The catalysed reaction is diphthine-[translation elongation factor 2] + NH4(+) + ATP = diphthamide-[translation elongation factor 2] + AMP + diphosphate + H(+). It participates in protein modification; peptidyl-diphthamide biosynthesis. Amidase that catalyzes the last step of diphthamide biosynthesis using ammonium and ATP. Diphthamide biosynthesis consists in the conversion of an L-histidine residue in the translation elongation factor eEF-2 (EEF2) to diphthamide. This chain is Diphthine--ammonia ligase (Dph6), found in Rattus norvegicus (Rat).